The sequence spans 410 residues: Retrovirus-related Pol polyprotein from type-1 retrotransposable element R1 2 (410 aa).

Residues 1 to 118 (GCPQGSIGGP…SCFRYLGVNV (118 aa)) form the Reverse transcriptase domain. Residues 254 to 410 (SSVIKLERLV…RLNLELDVNG (157 aa)) form a nucleic acid-binding endonuclease region.

The enzyme catalyses DNA(n) + a 2'-deoxyribonucleoside 5'-triphosphate = DNA(n+1) + diphosphate. In Nasonia vitripennis (Parasitic wasp), this protein is Retrovirus-related Pol polyprotein from type-1 retrotransposable element R1 2.